Consider the following 71-residue polypeptide: UPF0352 protein Spea_1764 (71 aa).

The protein belongs to the UPF0352 family.

The protein is UPF0352 protein Spea_1764 of Shewanella pealeana (strain ATCC 700345 / ANG-SQ1).